A 299-amino-acid polypeptide reads, in one-letter code: Hairy/enhancer-of-split related with YRPW motif protein 1 (299 aa).

Positions 1–53 are disordered; sequence MKRAHPDYSSSDSELDETIEVEKESADENGNLSSALCSMSPTTSSQVLARKRR. The span at 28 to 47 shows a compositional bias: polar residues; sequence ENGNLSSALCSMSPTTSSQV. The interval 48 to 117 is transcriptional repression and interaction with NCOR1 and SIN3A; sequence LARKRRRGII…GGKGYFDAHA (70 aa). Residues 49-104 enclose the bHLH domain; that stretch reads ARKRRRGIIEKRRRDRINNSLSELRRLVPSAFEKQGSAKLEKAEILQMTVDHLKML. Residues 122-158 form the Orange domain; it reads YRSLGFRECLAEVARYLSIIEGLDASDPLLVRLVSHL. A disordered region spans residues 194 to 234; the sequence is LLLPQNGHGNAGTAASPTEPHHQGRLASAHPEAPALRAPPS. Positions 289–292 match the YRPW motif motif; that stretch reads YRPW.

It belongs to the HEY family. May self-associate. Interacts with HES1, NCOR1 and SIN3A. Interacts with GATA4, GATA6 and HDAC1 and HEYL. Interacts with CCDC89/BOIP. In terms of tissue distribution, expressed in somitic mesoderm, brain, central nervous system, kidney, heart, nasal epithelium, limbs, lung, muscle, ovary and testis.

It is found in the nucleus. Functionally, transcriptional repressor which binds preferentially to the canonical E box sequence 5'-CACGTG-3'. Downstream effector of Notch signaling required for cardiovascular development. Specifically required for the Notch-induced endocardial epithelial to mesenchymal transition, which is itself criticial for cardiac valve and septum development. May be required in conjunction with HEY2 to specify arterial cell fate or identity. Promotes maintenance of neuronal precursor cells and glial versus neuronal fate specification. Represses transcription by the cardiac transcriptional activators GATA4 and GATA6 and by the neuronal bHLH factors ASCL1/MASH1 and NEUROD4/MATH3. The protein is Hairy/enhancer-of-split related with YRPW motif protein 1 (Hey1) of Mus musculus (Mouse).